Reading from the N-terminus, the 82-residue chain is Small ribosomal subunit protein uS17c (82 aa).

The protein belongs to the universal ribosomal protein uS17 family. As to quaternary structure, part of the 30S ribosomal subunit.

Its subcellular location is the plastid. It is found in the chloroplast. One of the primary rRNA binding proteins, it binds specifically to the 5'-end of 16S ribosomal RNA. In Emiliania huxleyi (Coccolithophore), this protein is Small ribosomal subunit protein uS17c (rps17).